An 858-amino-acid polypeptide reads, in one-letter code: Neural cell adhesion molecule 1 (858 aa).

A signal peptide spans 1–19 (MLRTKDLIWTLFFLGTAVS). Ig-like C2-type domains follow at residues 20–111 (LQVD…ATVN), 116–205 (QKLM…KDIQ), 212–302 (PTVQ…ASIH), 309–414 (PKIT…LEVQ), and 417–502 (PKLQ…ESLE). Over 20–721 (LQVDIVPSQG…NGSPTAGLST (702 aa)) the chain is Extracellular. Intrachain disulfides connect Cys-41/Cys-96 and Cys-139/Cys-189. Heparin is bound by residues 152–156 (KHKGR) and 161–165 (KKDVR). Asn-222 carries N-linked (GlcNAc...) asparagine glycosylation. Cys-235 and Cys-288 are oxidised to a cystine. N-linked (GlcNAc...) asparagine glycosylation is found at Asn-316, Asn-348, Asn-434, Asn-460, and Asn-489. The cysteines at positions 330 and 396 are disulfide-linked. A disulfide bridge connects residues Cys-437 and Cys-490. Fibronectin type-III domains are found at residues 510–609 (TPSS…TQPV) and 611–706 (EPSA…SAQP). The chain crosses the membrane as a helical span at residues 722–739 (GAIVGILIVIFVLLLVVM). The Cytoplasmic segment spans residues 740-858 (DITCYFLNKC…TQTKENESKA (119 aa)). The disordered stretch occupies residues 765–858 (PGAKGKDMEE…TQTKENESKA (94 aa)). 2 stretches are compositionally biased toward basic and acidic residues: residues 768–809 (KGKD…HTEP) and 817–834 (EPEKGPVETKSEPQESEA). 2 positions are modified to phosphoserine: Ser-780 and Ser-784.

As to quaternary structure, interacts with MDK. Found in a complex with SLC39A6, SLC39A10 and with NCAM1; this complex controls NCAM1 phosphorylation and integration into focal adhesion complexes during epithelial-tomesenchymal transition. Interacts with synaptic plasticity regulator PANTS. Post-translationally, polysialylated by ST8SIA2 and ST8SIA4. Polysialylation modulates cell interactions by confering both attractive and repulsive properties that are highly regulated by ST8SIA2 and ST8SIA4. Polysialylation is formed on a-2,3-linked sialic acid of core glycans.

Its subcellular location is the cell membrane. In terms of biological role, this protein is a cell adhesion molecule involved in neuron-neuron adhesion, neurite fasciculation, outgrowth of neurites, etc. This chain is Neural cell adhesion molecule 1, found in Rattus norvegicus (Rat).